The sequence spans 281 residues: Phosphatidylglycerol--prolipoprotein diacylglyceryl transferase (281 aa).

The next 4 membrane-spanning stretches (helical) occupy residues Val23 to Trp43, Phe71 to Tyr91, Trp107 to Phe127, and Ile133 to Val153. Residue Arg154 coordinates a 1,2-diacyl-sn-glycero-3-phospho-(1'-sn-glycerol). 3 helical membrane-spanning segments follow: residues Leu189 to Val209, Gly217 to Phe237, and Leu247 to Leu267.

The protein belongs to the Lgt family.

The protein localises to the cell inner membrane. The catalysed reaction is L-cysteinyl-[prolipoprotein] + a 1,2-diacyl-sn-glycero-3-phospho-(1'-sn-glycerol) = an S-1,2-diacyl-sn-glyceryl-L-cysteinyl-[prolipoprotein] + sn-glycerol 1-phosphate + H(+). The protein operates within protein modification; lipoprotein biosynthesis (diacylglyceryl transfer). Its function is as follows. Catalyzes the transfer of the diacylglyceryl group from phosphatidylglycerol to the sulfhydryl group of the N-terminal cysteine of a prolipoprotein, the first step in the formation of mature lipoproteins. This is Phosphatidylglycerol--prolipoprotein diacylglyceryl transferase from Brucella anthropi (strain ATCC 49188 / DSM 6882 / CCUG 24695 / JCM 21032 / LMG 3331 / NBRC 15819 / NCTC 12168 / Alc 37) (Ochrobactrum anthropi).